An 888-amino-acid polypeptide reads, in one-letter code: Leucine--tRNA ligase (888 aa).

Positions 43–53 (PYPSGRIHMGH) match the 'HIGH' region motif. The 'KMSKS' region signature appears at 644–648 (KMSKS). Lysine 647 serves as a coordination point for ATP.

Belongs to the class-I aminoacyl-tRNA synthetase family.

It localises to the cytoplasm. The catalysed reaction is tRNA(Leu) + L-leucine + ATP = L-leucyl-tRNA(Leu) + AMP + diphosphate. This Rhodopseudomonas palustris (strain BisA53) protein is Leucine--tRNA ligase.